Here is a 508-residue protein sequence, read N- to C-terminus: Photosystem II CP47 reaction center protein (508 aa).

The next 6 membrane-spanning stretches (helical) occupy residues Ala-21–Ser-36, Ile-101–Trp-115, Gly-140–Phe-156, Ile-203–Ser-218, Val-237–Val-252, and Asn-457–Arg-472.

The protein belongs to the PsbB/PsbC family. PsbB subfamily. In terms of assembly, PSII is composed of 1 copy each of membrane proteins PsbA, PsbB, PsbC, PsbD, PsbE, PsbF, PsbH, PsbI, PsbJ, PsbK, PsbL, PsbM, PsbT, PsbX, PsbY, PsbZ, Psb30/Ycf12, at least 3 peripheral proteins of the oxygen-evolving complex and a large number of cofactors. It forms dimeric complexes. Binds multiple chlorophylls. PSII binds additional chlorophylls, carotenoids and specific lipids. is required as a cofactor.

It localises to the plastid. It is found in the chloroplast thylakoid membrane. Its function is as follows. One of the components of the core complex of photosystem II (PSII). It binds chlorophyll and helps catalyze the primary light-induced photochemical processes of PSII. PSII is a light-driven water:plastoquinone oxidoreductase, using light energy to abstract electrons from H(2)O, generating O(2) and a proton gradient subsequently used for ATP formation. This is Photosystem II CP47 reaction center protein from Staurastrum punctulatum (Green alga).